A 141-amino-acid polypeptide reads, in one-letter code: Small ribosomal subunit protein uS8c (141 aa).

It belongs to the universal ribosomal protein uS8 family. Part of the 30S ribosomal subunit.

The protein localises to the plastid. It is found in the chloroplast. One of the primary rRNA binding proteins, it binds directly to 16S rRNA central domain where it helps coordinate assembly of the platform of the 30S subunit. The chain is Small ribosomal subunit protein uS8c (rps8) from Chlamydomonas reinhardtii (Chlamydomonas smithii).